A 134-amino-acid polypeptide reads, in one-letter code: Large ribosomal subunit protein uL16c (134 aa).

The protein belongs to the universal ribosomal protein uL16 family. In terms of assembly, part of the 50S ribosomal subunit.

It is found in the plastid. The protein resides in the chloroplast. The protein is Large ribosomal subunit protein uL16c of Gnetum parvifolium (Small-leaved jointfir).